The primary structure comprises 400 residues: Hyaluronan and proteoglycan link protein 4 (400 aa).

The signal sequence occupies residues 1–30 (MACAPGALGHRALWAVAWGLLLLVPVLAGA). One can recognise an Ig-like C2-type domain in the interval 47 to 155 (SVVVQTAPGQ…VTNELEDDVG (109 aa)). 5 disulfide bridges follow: Cys69–Cys144, Cys186–Cys264, Cys210–Cys231, Cys291–Cys361, and Cys316–Cys337. Asn133 carries N-linked (GlcNAc...) asparagine glycosylation. Link domains follow at residues 164–266 (VVFP…FCFT) and 271–363 (GRVF…YCYR).

It belongs to the HAPLN family. In terms of tissue distribution, expressed predominantly in brain where it is found mainly throughout the midbrain and hindbrain in a perineuronal net pattern.

The protein resides in the secreted. Its subcellular location is the extracellular space. The protein localises to the extracellular matrix. Its function is as follows. Essential for the proper localization of brevican (BCAN), mainly as a perineuronal nets (PNNs)-type deposition in the brainstem and cerebellum thereby playing a key role in the formation and structural organization of PNNs. Contributes to the formation and transmission of inhibitory GABAergic synapses between Purkinje cells and deep cerebellar nuclei neurons. The chain is Hyaluronan and proteoglycan link protein 4 (Hapln4) from Mus musculus (Mouse).